We begin with the raw amino-acid sequence, 431 residues long: TDP-daunosamine transferase DnrS (431 aa).

Positions 1–23 (MKVLVTAFAMDAHFNGVVPLAWA) are cleaved as a signal peptide.

Belongs to the glycosyltransferase 28 family.

The catalysed reaction is dTDP-beta-L-daunosamine + epsilon-rhodomycinone = rhodomycin D + dTDP + H(+). It participates in antibiotic biosynthesis; daunorubicin biosynthesis. It functions in the pathway antibiotic biosynthesis; carminomycin biosynthesis. Its function is as follows. Involved in the biosynthesis of the anthracyclines carminomycin and daunorubicin (daunomycin) which are aromatic polyketide antibiotics that exhibit high cytotoxicity and are widely applied in the chemotherapy of a variety of cancers. Catalyzes the addition of the TDP activated glycoside, L-daunosamine-TDP (2,3,6-trideoxy-3-aminohexose-TDP) at position C-7 of epsilon-rhodomycinone to yield rhodomycin D. Glycosylation is a prerequisite for biological activity of anthracyclines and requires DnrQ which seems to act as an activator. This Streptomyces peucetius protein is TDP-daunosamine transferase DnrS (dnrS).